The chain runs to 464 residues: MMARRDPTSWAKRLVRAQTLQKQRRAPVGPRAPPPDEEDPRLKCKNCGAFGHTARSTRCPMKCWKAALVPATLGKKEGKENLKPWKPRVEANPGPLNKDKGEKEERPRQQDPQRKALLHMFSGKPPEKPLPNGKGSTEPSDYLRVASGPMPVHTTSKRPRVDPVLADGSATEMSDRGSVLASLSPLRKASLSSSSSLGPKERQTGAAADIPQPAVRHQGREPLLVVKPTHSSPEGGCREVPQAASKTHGLLQAARPQAQDKRPAVTSQPCPPAATHSLGLGSNLSFGPGAKRPAQAPIQACLNFPKKPRLGPFQIPESAIQGGELGAPENLQPPPAATELGPSTSPQMGRRTPAQVPSVERQPPHSRPCLPTAQACTMSHHSAASHDGAQPLRVLFRRLENGRWSSSLLAAPSFHSPEKPGAFLAQSPHVSEKSEAPCVRVPPSVLYEDLQVSSSSEDSDSDLE.

3 disordered regions span residues 1-42 (MMAR…DPRL), 70-389 (PATL…HDGA), and 411-437 (APSF…SEAP). Composition is skewed to basic and acidic residues over residues 74-89 (GKKE…KPRV) and 97-114 (NKDK…DPQR). Over residues 180-197 (LASLSPLRKASLSSSSSL) the composition is skewed to low complexity.

The protein belongs to the FAM90 family.

The chain is Protein FAM90A3 from Homo sapiens (Human).